The primary structure comprises 147 residues: Hemoglobin subunit beta-2 (147 aa).

Residues 3–147 form the Globin domain; sequence HWTAEEKATI…LVAALSHGYF (145 aa). Positions 64 and 93 each coordinate heme b.

It belongs to the globin family. In terms of assembly, heterotetramer of two alpha chains and two beta chains. In terms of tissue distribution, red blood cells.

In terms of biological role, this is a larval (tadpole) beta-globin. This chain is Hemoglobin subunit beta-2 (hbb2), found in Xenopus tropicalis (Western clawed frog).